Consider the following 297-residue polypeptide: 4-hydroxy-tetrahydrodipicolinate synthase (297 aa).

Threonine 46 contributes to the pyruvate binding site. Tyrosine 136 (proton donor/acceptor) is an active-site residue. Residue lysine 165 is the Schiff-base intermediate with substrate of the active site. Threonine 206 lines the pyruvate pocket.

Belongs to the DapA family. Homotetramer; dimer of dimers.

It is found in the cytoplasm. The enzyme catalyses L-aspartate 4-semialdehyde + pyruvate = (2S,4S)-4-hydroxy-2,3,4,5-tetrahydrodipicolinate + H2O + H(+). The protein operates within amino-acid biosynthesis; L-lysine biosynthesis via DAP pathway; (S)-tetrahydrodipicolinate from L-aspartate: step 3/4. Functionally, catalyzes the condensation of (S)-aspartate-beta-semialdehyde [(S)-ASA] and pyruvate to 4-hydroxy-tetrahydrodipicolinate (HTPA). The protein is 4-hydroxy-tetrahydrodipicolinate synthase of Sulfurimonas denitrificans (strain ATCC 33889 / DSM 1251) (Thiomicrospira denitrificans (strain ATCC 33889 / DSM 1251)).